Consider the following 118-residue polypeptide: MICOS complex subunit MIC13 (118 aa).

Topologically, residues 1–7 (MVARVWS) are mitochondrial matrix. Residues 8–26 (LMRFLIKGSVAGGAVYLVY) form a helical membrane-spanning segment. The Mitochondrial intermembrane portion of the chain corresponds to 27–118 (DQELLGPSDK…GWEYVKARTK (92 aa)).

The protein belongs to the MICOS complex subunit Mic13 family. As to quaternary structure, component of the mitochondrial contact site and cristae organizing system (MICOS) complex, composed of at least MICOS10/MIC10, CHCHD3/MIC19, CHCHD6/MIC25, APOO/MIC26, MICOS13/MIC13, APOOL/MIC27 and IMMT/MIC60. The MICOS complex associates with mitochondrial outer membrane proteins SAMM50, MTX1 and MTX2 (together described as components of the mitochondrial outer membrane sorting assembly machinery (SAM) complex) and DNAJC11, mitochondrial inner membrane protein TMEM11 and with HSPA9. The MICOS and SAM complexes together with DNAJC11 are part of a large protein complex spanning both membranes termed the mitochondrial intermembrane space bridging (MIB) complex.

The protein resides in the mitochondrion inner membrane. Its function is as follows. Component of the MICOS complex, a large protein complex of the mitochondrial inner membrane that plays crucial roles in the maintenance of crista junctions, inner membrane architecture, and formation of contact sites to the outer membrane. Constituent of mature MICOS complex, it is required for the formation of cristae junction (CJ) and maintenance of cristae morphology. Required for the incorporation of MICOS10/MIC10 into the MICOS complex. The protein is MICOS complex subunit MIC13 of Homo sapiens (Human).